The following is a 372-amino-acid chain: Cytochrome b (372 aa).

The next 4 membrane-spanning stretches (helical) occupy residues phenylalanine 25–isoleucine 45, tryptophan 69–isoleucine 90, tryptophan 105–leucine 125, and phenylalanine 170–isoleucine 190. Residues histidine 75 and histidine 89 each contribute to the heme b site. Heme b-binding residues include histidine 174 and histidine 188. Residue histidine 193 coordinates a ubiquinone. Transmembrane regions (helical) follow at residues tyrosine 218 to methionine 238, leucine 280 to histidine 300, leucine 312 to threonine 332, and phenylalanine 339 to proline 358.

The protein belongs to the cytochrome b family. As to quaternary structure, the cytochrome bc1 complex contains 3 respiratory subunits (MT-CYB, CYC1 and UQCRFS1), 2 core proteins (UQCRC1 and UQCRC2) and probably 6 low-molecular weight proteins. The cofactor is heme b.

Its subcellular location is the mitochondrion inner membrane. Functionally, component of the ubiquinol-cytochrome c reductase complex (complex III or cytochrome b-c1 complex) that is part of the mitochondrial respiratory chain. The b-c1 complex mediates electron transfer from ubiquinol to cytochrome c. Contributes to the generation of a proton gradient across the mitochondrial membrane that is then used for ATP synthesis. This Sinomicrurus japonicus (Coral snake) protein is Cytochrome b (MT-CYB).